A 402-amino-acid polypeptide reads, in one-letter code: Protein RETARDED ROOT GROWTH-LIKE (402 aa).

A helical membrane pass occupies residues 375-395; sequence SATLEWLIIILISMEIAISFY.

Belongs to the RMD1/sif2 family. In terms of tissue distribution, highly expressed in germinating seeds and developing seedlings. Also present at low levels in seedlings, roots, leaves, stems and flowers, and barely in siliques.

It localises to the mitochondrion membrane. The protein localises to the mitochondrion. In terms of biological role, mediates abscisic acid (ABA) signal transduction through mitochondrial retrograde regulation involving ABI4 during seed germination and seedling growth, and leading to the production of reactive oxygen species (ROS) by the alternative respiratory pathway. Required for the maintenance of mitochondrial structure. The chain is Protein RETARDED ROOT GROWTH-LIKE from Arabidopsis thaliana (Mouse-ear cress).